Consider the following 311-residue polypeptide: Pyrimidine-specific ribonucleoside hydrolase RihA (311 aa).

The active site involves H240.

The protein belongs to the IUNH family. RihA subfamily.

In terms of biological role, hydrolyzes with equal efficiency cytidine or uridine to ribose and cytosine or uracil, respectively. This is Pyrimidine-specific ribonucleoside hydrolase RihA from Escherichia coli (strain K12 / MC4100 / BW2952).